Consider the following 141-residue polypeptide: Holo-[acyl-carrier-protein] synthase (141 aa).

Mg(2+) is bound by residues aspartate 7 and glutamate 57.

The protein belongs to the P-Pant transferase superfamily. AcpS family. The cofactor is Mg(2+).

Its subcellular location is the cytoplasm. It catalyses the reaction apo-[ACP] + CoA = holo-[ACP] + adenosine 3',5'-bisphosphate + H(+). In terms of biological role, transfers the 4'-phosphopantetheine moiety from coenzyme A to a Ser of acyl-carrier-protein. The polypeptide is Holo-[acyl-carrier-protein] synthase (Corynebacterium efficiens (strain DSM 44549 / YS-314 / AJ 12310 / JCM 11189 / NBRC 100395)).